The sequence spans 74 residues: Large ribosomal subunit protein uL30 (74 aa).

Belongs to the universal ribosomal protein uL30 family. Part of the 50S ribosomal subunit.

In Koribacter versatilis (strain Ellin345), this protein is Large ribosomal subunit protein uL30.